A 226-amino-acid chain; its full sequence is MIPSSYPSAEEIARLSARMLLEIGAVNFNTDEPYTLASGLPSPSYIDCRKLISFPRIRSTLMDFMAVTVMRNAGFEAFDNIAGGETAGIPFAALVAERLALPMTYVRKKPKGYGRNARIEGAMSEGERVLLVEDLTTDGGSKLSFVDAIRETGATCGHTAVIFYYDIFPETTKTLGDHGVQLHYLCTWWDVLAEARAQAAFSTETLDEVEKFLRDPRAWQEANKKT.

5-phospho-alpha-D-ribose 1-diphosphate contacts are provided by residues R107, K108, K111, and 133-141 (EDLTTDGGS). An orotate-binding site is contributed by T137.

Belongs to the purine/pyrimidine phosphoribosyltransferase family. PyrE subfamily. In terms of assembly, homodimer. Requires Mg(2+) as cofactor.

It carries out the reaction orotidine 5'-phosphate + diphosphate = orotate + 5-phospho-alpha-D-ribose 1-diphosphate. It functions in the pathway pyrimidine metabolism; UMP biosynthesis via de novo pathway; UMP from orotate: step 1/2. Catalyzes the transfer of a ribosyl phosphate group from 5-phosphoribose 1-diphosphate to orotate, leading to the formation of orotidine monophosphate (OMP). This is Orotate phosphoribosyltransferase from Ruegeria sp. (strain TM1040) (Silicibacter sp.).